Reading from the N-terminus, the 156-residue chain is Endoribonuclease YbeY (156 aa).

3 residues coordinate Zn(2+): His122, His126, and His132.

Belongs to the endoribonuclease YbeY family. Requires Zn(2+) as cofactor.

The protein localises to the cytoplasm. Functionally, single strand-specific metallo-endoribonuclease involved in late-stage 70S ribosome quality control and in maturation of the 3' terminus of the 16S rRNA. The chain is Endoribonuclease YbeY from Syntrophomonas wolfei subsp. wolfei (strain DSM 2245B / Goettingen).